The sequence spans 700 residues: Transketolase (700 aa).

N-acetylthreonine is present on Thr-2. Position 45 (His-45) interacts with substrate. Residues Thr-48, His-85, 133–135 (GPL), and Leu-135 contribute to the thiamine diphosphate site. Position 177 (Asp-177) interacts with Mg(2+). Thiamine diphosphate contacts are provided by Gly-178 and Asn-207. Positions 207 and 209 each coordinate Mg(2+). His-283, Arg-378, and Ser-405 together coordinate substrate. His-283 serves as a coordination point for thiamine diphosphate. Residue Glu-441 is the Proton donor of the active site. A thiamine diphosphate-binding site is contributed by Phe-467. Substrate is bound by residues His-491, Asp-499, and Arg-552.

It belongs to the transketolase family. Homodimer. Requires Mg(2+) as cofactor. Ca(2+) serves as cofactor. It depends on Mn(2+) as a cofactor. The cofactor is Co(2+). Thiamine diphosphate is required as a cofactor.

The catalysed reaction is D-sedoheptulose 7-phosphate + D-glyceraldehyde 3-phosphate = aldehydo-D-ribose 5-phosphate + D-xylulose 5-phosphate. In terms of biological role, catalyzes the reversible transfer of a two-carbon ketol group from sedoheptulose-7-phosphate to glyceraldehyde-3-phosphate, producing xylulose-5-phosphate and ribose-5-phosphate. Catalyzes the transfer of a two-carbon ketol group from a ketose donor to an aldose acceptor, via a covalent intermediate with the cofactor thiamine pyrophosphate. In Mycobacterium tuberculosis (strain ATCC 25618 / H37Rv), this protein is Transketolase (tkt).